We begin with the raw amino-acid sequence, 68 residues long: UPF0253 protein VFMJ11_0680 (68 aa).

It belongs to the UPF0253 family.

In Aliivibrio fischeri (strain MJ11) (Vibrio fischeri), this protein is UPF0253 protein VFMJ11_0680.